The chain runs to 70 residues: uncharacterized protein (70 aa).

It is found in the plastid. It localises to the chloroplast. This is an uncharacterized protein from Mesostigma viride (Green alga).